We begin with the raw amino-acid sequence, 569 residues long: MARILITSALPYINGVKHLGNLAGSMLPADVYARFQRARGNDTLYICATDEHGTPAELAAAAAGQDVAEYCAEQHVLQHDVGRAFGLSWDHFGRSSSPQNHRLTQHFCEVLEERGLIEERVDQMVYSIDDARFLPDRYIEGTCPHCGFDKARGDQCDNCGNLLDPTELKDPYSVISGSRNLEVRDTRHLYLLQTKMADKIRAWIDSHPDWQLLAKSIAYKHLDEGLIDRGITRDLAWGIPVTKGEFPRPGFEDKVFYVWFDAPIEYIAATQEWADEGAGRDWKSWWRTDEGADDVRYVQFMGKDNVAFHTVSFPATILGSQEPWKSVDMLKAFNWLNWYGGKFSTSNKRGVFMDAALEILPPDFWRWYLTSNAPESSDTAFTWEQFASAVNRDLADVLGNFVNRILKFTEGKFDGVIPDGGAPGPLEEKLYADVSARLADLTEQMDAVEVRKSAQALRALWVVGNEYLQEAAPWTAIKTDRDRAAVIVRTALNLAALYARISAPFIPFAAEKIGEAFQLPWPPVWPTTDAAAELSSLPVGLSVRAPEVLFKKIEDEQIAEWTRRFGGAE.

The 'HIGH' region motif lies at 11–21 (PYINGVKHLGN). Positions 143, 146, 156, and 159 each coordinate Zn(2+). Residues 342 to 346 (KFSTS) carry the 'KMSKS' region motif. Threonine 345 is an ATP binding site.

It belongs to the class-I aminoacyl-tRNA synthetase family. MetG type 1 subfamily. Monomer. Requires Zn(2+) as cofactor.

It localises to the cytoplasm. It carries out the reaction tRNA(Met) + L-methionine + ATP = L-methionyl-tRNA(Met) + AMP + diphosphate. In terms of biological role, is required not only for elongation of protein synthesis but also for the initiation of all mRNA translation through initiator tRNA(fMet) aminoacylation. The sequence is that of Methionine--tRNA ligase from Caulobacter sp. (strain K31).